The following is a 303-amino-acid chain: Phosphatidylglycerol--prolipoprotein diacylglyceryl transferase (303 aa).

4 helical membrane-spanning segments follow: residues 18-38, 58-78, 106-126, and 133-153; these read LGPF…LVGL, LLPI…VAFE, IWGG…SIIF, and EPFW…QAIG. Arg154 contacts a 1,2-diacyl-sn-glycero-3-phospho-(1'-sn-glycerol). 3 consecutive transmembrane segments (helical) span residues 193–213, 223–243, and 266–286; these read PTFL…IFLF, LPPG…RFWI, and IAQL…WRIY.

The protein belongs to the Lgt family.

The protein localises to the cell inner membrane. The enzyme catalyses L-cysteinyl-[prolipoprotein] + a 1,2-diacyl-sn-glycero-3-phospho-(1'-sn-glycerol) = an S-1,2-diacyl-sn-glyceryl-L-cysteinyl-[prolipoprotein] + sn-glycerol 1-phosphate + H(+). Its pathway is protein modification; lipoprotein biosynthesis (diacylglyceryl transfer). Catalyzes the transfer of the diacylglyceryl group from phosphatidylglycerol to the sulfhydryl group of the N-terminal cysteine of a prolipoprotein, the first step in the formation of mature lipoproteins. This is Phosphatidylglycerol--prolipoprotein diacylglyceryl transferase from Prochlorococcus marinus (strain NATL1A).